Reading from the N-terminus, the 497-residue chain is MKYHDLRDFLALLEKQGELKRITLPVDPYLEMTEIADRTLRAGGPALLFENPKGYSMPVLCNLFGTPKRVAMGMGQEDVSALREVGKLLAFLKEPEPPKGFRDLFDKLPQFKQVLNMPTKRLRGAPCQQKILEGDAVDLTRIPIMQCWPEDAAPLITWGLTVTRGPHKERQNLGIYRQQLIGKNKLIMRWLSHRGGALDFQEWCAAHPGERFPVSVALGADPATILGAVTPVPDTLSEYAFAGLLRGTKTEVVKCISNDLEVPASAEIVLEGYIEQGDMAPEGPYGDHTGYYNEIDNFPVFTVTHITQRDDAIYHSTYTGRPPDEPAVLGVALNEVFVPILQKQFPEIVDFYLPPEGCSYRLAVVTIKKQYAGHAKRVMMGVWSFLRQFMYTKFVIVCDDDVNARDWNDVIWAITTRMDPARDTVLVENTPIDYLDFASPVSGLGSKMGLDATNKWPGETSREWGRPIQKDPEVTARIDAIWDELAILNDGKPESDR.

N172 contributes to the Mn(2+) binding site. Prenylated FMN contacts are provided by residues 175-177 (IYR), 189-191 (RWL), and 194-195 (RG). E238 contributes to the Mn(2+) binding site. Residue D287 is the Proton donor of the active site.

It belongs to the UbiD family. In terms of assembly, homohexamer. Prenylated FMN is required as a cofactor. It depends on Mn(2+) as a cofactor.

It localises to the cell membrane. It catalyses the reaction a 4-hydroxy-3-(all-trans-polyprenyl)benzoate + H(+) = a 2-(all-trans-polyprenyl)phenol + CO2. It functions in the pathway cofactor biosynthesis; ubiquinone biosynthesis. Its function is as follows. Catalyzes the decarboxylation of 3-octaprenyl-4-hydroxy benzoate to 2-octaprenylphenol, an intermediate step in ubiquinone biosynthesis. This Enterobacter sp. (strain 638) protein is 3-octaprenyl-4-hydroxybenzoate carboxy-lyase.